The sequence spans 633 residues: Pesticidal crystal protein Cry2Ab (633 aa).

It belongs to the delta endotoxin family.

Functionally, promotes colloidosmotic lysis by binding to the midgut epithelial cells of lepidopteran (Manduca sexta) larvae. The chain is Pesticidal crystal protein Cry2Ab (cry2Ab) from Bacillus thuringiensis subsp. kurstaki.